We begin with the raw amino-acid sequence, 374 residues long: DNA/RNA-binding protein ALBA4 (374 aa).

The protein belongs to the histone-like Alba family.

It is found in the cytoplasm. Its subcellular location is the cell cortex. The protein resides in the perinuclear region. Possesses DNA- and RNA-binding activities. Binds to DNA with relaxed sequence specificity. May associate with the subtelomeric TARE6 repeats. Regulates the abundance of transcript sub-populations in a stage-specific manner. Regulates activation of male gametocytes. Participates in the coordination of sporozoite development in the oocyst. In Plasmodium yoelii yoelii, this protein is DNA/RNA-binding protein ALBA4.